A 146-amino-acid polypeptide reads, in one-letter code: MSINIDIKKITDLLNSSILFPDDLQELLREKYIVLERKSNGTPTVAHIYKTMARFDNKSIYRIAKFLFMNRPDVIKLLFLEDVEPLLPYKSINISINNTEYPQLEGPIGTKIALLELFNAFRTGISEPIPYYYLPLRKDINNIVTK.

It belongs to the orthopoxvirus OPG114 family. Part of a complex composed of the kinase OPG054, OPG092, OPG100, OPG114, OPG115, OPG142 and OPG157.

The protein resides in the virion. Functionally, late protein which is part of a large complex required for early virion morphogenesis. This complex participates in the formation of virosomes and the incorporation of virosomal contents into nascent immature virions. The chain is Core protein OPG114 (OPG114) from Monkeypox virus.